We begin with the raw amino-acid sequence, 93 residues long: UPF0298 protein lwe2074 (93 aa).

The protein belongs to the UPF0298 family.

The protein localises to the cytoplasm. The protein is UPF0298 protein lwe2074 of Listeria welshimeri serovar 6b (strain ATCC 35897 / DSM 20650 / CCUG 15529 / CIP 8149 / NCTC 11857 / SLCC 5334 / V8).